The primary structure comprises 286 residues: uncharacterized protein (286 aa).

7 consecutive transmembrane segments (helical) span residues 30–50, 68–88, 99–119, 136–156, 169–189, 205–225, and 254–274; these read LTFMVAAFGIFFIFLVALTVQ, LSTIAVITSFVSLILYFVTAF, WFWALIITDVISYGITLGILL, IVYAFLGASLVFGSVWGLSAL, LFHILLWAFVISIVASLLSFI, IIPGLSLIVGGIFSLISVYFV, and SALFFGAWLISSFMNLVYFIL.

The protein localises to the cell membrane. This is an uncharacterized protein from Mycoplasma genitalium (strain ATCC 33530 / DSM 19775 / NCTC 10195 / G37) (Mycoplasmoides genitalium).